Reading from the N-terminus, the 278-residue chain is Tryptophan synthase alpha chain (278 aa).

Active-site proton acceptor residues include Glu50 and Asp61.

The protein belongs to the TrpA family. As to quaternary structure, tetramer of two alpha and two beta chains.

It carries out the reaction (1S,2R)-1-C-(indol-3-yl)glycerol 3-phosphate + L-serine = D-glyceraldehyde 3-phosphate + L-tryptophan + H2O. It functions in the pathway amino-acid biosynthesis; L-tryptophan biosynthesis; L-tryptophan from chorismate: step 5/5. Its function is as follows. The alpha subunit is responsible for the aldol cleavage of indoleglycerol phosphate to indole and glyceraldehyde 3-phosphate. The chain is Tryptophan synthase alpha chain from Nitrobacter winogradskyi (strain ATCC 25391 / DSM 10237 / CIP 104748 / NCIMB 11846 / Nb-255).